A 180-amino-acid chain; its full sequence is Stathmin-3 (180 aa).

Residues Cys22 and Cys24 are each lipidated (S-palmitoyl cysteine). Residues 38–180 (GDMEVKQLDK…NKEQREEMSG (143 aa)) form the SLD domain. Phosphoserine is present on residues Ser50, Ser60, Ser65, Ser68, Ser72, Ser73, and Ser81. The tract at residues 59–82 (KSPSDLSPESPMLSSPPKKKDTSL) is disordered. Low complexity predominate over residues 60–74 (SPSDLSPESPMLSSP). Residues 76–179 (KKKDTSLEEL…RNKEQREEMS (104 aa)) are a coiled coil.

The protein belongs to the stathmin family. As to quaternary structure, interacts with STAT3. Interacts with CLU (secreted form); this interaction may act as an important modulator during neuronal differentiation. In terms of processing, N-terminal palmitoylation promotes specific anchoring to the cytosolic leaflet of Golgi membranes and subsequent vesicular trafficking along dendrites and axons. Neuronal Stathmins are substrates for palmitoyltransferases ZDHHC3, ZDHHC7 and ZDHHC15.

The protein localises to the golgi apparatus. Its subcellular location is the cell projection. It is found in the growth cone. It localises to the axon. The protein resides in the cytoplasm. The protein localises to the cytosol. Exhibits microtubule-destabilizing activity, which is antagonized by STAT3. The sequence is that of Stathmin-3 (STMN3) from Macaca fascicularis (Crab-eating macaque).